A 1103-amino-acid chain; its full sequence is MPGVIMDEPNVGGHPKGPSVPDSSRNGIPPLSGSDGAHGVSSAHNDGANRLNGSAKGIDGYKQNVDSSTTKIDFVGLRQPPELPHITQGFFPFSKLVNRSVQQCWNELSELITELAEVQVPPQDSGPLPGAPNGKPLGNQSEQNLQKKLRLLDFAHSKRAEFIKLLVLSQWSRQAADVSRLIDIQNFIRIRHQAYAGALQCIGDMKRDLVQAQVGNPDLKTALEVLAKGKVVSMPTLGYKPPRPLTAKGALKRLQKINRLISARLVLSDSVPTPFQTYRVHDGRVTFIVPDEFELDLSIGAEDETSQFYFVDIRFLFTPSSPIPKGRIFNELDMRINDTLRTKGLAGCFDLLHGLVLTTKINALFKQAAELARGLWSDTLRVELLHRTLVLQYWTLRPGPKSWLEIGIKSGRRSSENSINGLPSIGLRWIRDGQEVDSRDIEFDSKNLSMECILRSVIALHTSHILSSAFEKLSKHSLFSTGALSLRGRLSRTEPGACQLDVQLTRSRHLRVSVEPMSGTSILSTTPSTLERSDVDRNTDKPFADEIVSRVARLRCISAIEEVESNAKLLGFQVVNPRSLKLDFRRHFPANILRFSFFWHRSWERNWVLAATSSMDGDSWWVVQLQPAVPSESALPFDANSGISAPRSAQIVCNTFFPAPQHNMKSPFADMGHSLYGILTMQANARYLADLQSISFHPPLPQLVIEASLQVPDILIHYQALKLPRAFQVAMPAELARRSFIKDTIRLAFSGVDPHEKAAVLVAYGELLSPPNDVGALVSKQDRSLVLHHGGNKFAIRLLTAAGRSAMCELLESLQRLECALSILETLRRKKMQPQSLSLSRVGFLYGPRAELSANIDINLTTSSTHTIIDPLHLVTQEKPLFQLRLGIAFDYPNPHRRMQGSFTSLLNNAGATSSLGTVTGLLSVTLPLMQALDGLMANPSHKDPLRVQVIARNAKTFQIHYPMQKVRFQLLITQRPNSLVWVLREAGGLQGRSSEDQLKSRLKERLYHSKGDGWQGLENGVVATIDKVGNLLTELDKCFSGLDDIPILNQSPLETKPIPSKPTMGNTEPAASGNTVQNARLENKSPQKAAATHSNADVITID.

Disordered regions lie at residues 1-63 (MPGV…GYKQ), 120-140 (VPPQDSGPLPGAPNGKPLGNQ), and 1054-1103 (LETK…ITID). Positions 1073-1103 (SGNTVQNARLENKSPQKAAATHSNADVITID) are enriched in polar residues.

This sequence belongs to the Mediator complex subunit 14 family. Component of the Mediator complex.

It is found in the nucleus. Its function is as follows. Component of the Mediator complex, a coactivator involved in the regulated transcription of nearly all RNA polymerase II-dependent genes. Mediator functions as a bridge to convey information from gene-specific regulatory proteins to the basal RNA polymerase II transcription machinery. Mediator is recruited to promoters by direct interactions with regulatory proteins and serves as a scaffold for the assembly of a functional preinitiation complex with RNA polymerase II and the general transcription factors. In Aspergillus terreus (strain NIH 2624 / FGSC A1156), this protein is Mediator of RNA polymerase II transcription subunit 14 (rgr1).